The following is a 198-amino-acid chain: Peptidyl-tRNA hydrolase (198 aa).

Residue Tyr16 coordinates tRNA. The active-site Proton acceptor is the His21. The tRNA site is built by Tyr67, Asn69, and Asn115.

Belongs to the PTH family. Monomer.

Its subcellular location is the cytoplasm. The enzyme catalyses an N-acyl-L-alpha-aminoacyl-tRNA + H2O = an N-acyl-L-amino acid + a tRNA + H(+). In terms of biological role, hydrolyzes ribosome-free peptidyl-tRNAs (with 1 or more amino acids incorporated), which drop off the ribosome during protein synthesis, or as a result of ribosome stalling. Functionally, catalyzes the release of premature peptidyl moieties from peptidyl-tRNA molecules trapped in stalled 50S ribosomal subunits, and thus maintains levels of free tRNAs and 50S ribosomes. The protein is Peptidyl-tRNA hydrolase of Gloeobacter violaceus (strain ATCC 29082 / PCC 7421).